A 382-amino-acid polypeptide reads, in one-letter code: Proton extrusion protein PxcA (382 aa).

4 consecutive transmembrane segments (helical) span residues 156–176, 257–277, 305–325, and 340–360; these read TLIS…VQQV, AVKN…VCVF, IILF…TVLL, and FILL…KYWI.

Belongs to the CemA family.

It localises to the cell inner membrane. Its function is as follows. Required for H(+) efflux immediately after light irradiation to form a rapid H(+) concentration gradient across the thylakoid membranes. Together with PxcL, contributes to transient H(+) uptake following dark to light transition. This chain is Proton extrusion protein PxcA, found in Synechococcus sp. (strain WH7803).